A 297-amino-acid polypeptide reads, in one-letter code: Aspartate carbamoyltransferase catalytic subunit (297 aa).

The carbamoyl phosphate site is built by Arg-49 and Thr-50. Residue Lys-77 participates in L-aspartate binding. 3 residues coordinate carbamoyl phosphate: Arg-99, His-129, and Gln-132. L-aspartate-binding residues include Arg-162 and Arg-215. Residues Gly-256 and Pro-257 each coordinate carbamoyl phosphate.

The protein belongs to the aspartate/ornithine carbamoyltransferase superfamily. ATCase family. Heterododecamer (2C3:3R2) of six catalytic PyrB chains organized as two trimers (C3), and six regulatory PyrI chains organized as three dimers (R2).

The catalysed reaction is carbamoyl phosphate + L-aspartate = N-carbamoyl-L-aspartate + phosphate + H(+). It functions in the pathway pyrimidine metabolism; UMP biosynthesis via de novo pathway; (S)-dihydroorotate from bicarbonate: step 2/3. Its function is as follows. Catalyzes the condensation of carbamoyl phosphate and aspartate to form carbamoyl aspartate and inorganic phosphate, the committed step in the de novo pyrimidine nucleotide biosynthesis pathway. The chain is Aspartate carbamoyltransferase catalytic subunit from Legionella pneumophila subsp. pneumophila (strain Philadelphia 1 / ATCC 33152 / DSM 7513).